A 346-amino-acid chain; its full sequence is NADH-ubiquinone oxidoreductase chain 2 (346 aa).

Transmembrane regions (helical) follow at residues 1–21 (MSPY…MLIS), 26–46 (WVFM…ILVW), 60–80 (FIVQ…SLSG), 96–116 (MMIM…YWVV), 122–142 (LNYI…LAVL), 151–171 (SSML…GGLG), 178–198 (LLAF…VAGS), 199–219 (LLGL…FSIL), 242–262 (VLLG…GFFG), 274–294 (LLLG…FYYL), and 320–340 (LSGL…LVGG).

This sequence belongs to the complex I subunit 2 family.

It localises to the mitochondrion inner membrane. The catalysed reaction is a ubiquinone + NADH + 5 H(+)(in) = a ubiquinol + NAD(+) + 4 H(+)(out). Core subunit of the mitochondrial membrane respiratory chain NADH dehydrogenase (Complex I) that is believed to belong to the minimal assembly required for catalysis. Complex I functions in the transfer of electrons from NADH to the respiratory chain. The immediate electron acceptor for the enzyme is believed to be ubiquinone. The chain is NADH-ubiquinone oxidoreductase chain 2 (ND2) from Branchiostoma floridae (Florida lancelet).